A 162-amino-acid chain; its full sequence is Regulator of sigma D (162 aa).

Belongs to the Rsd/AlgQ family. In terms of assembly, interacts with RpoD.

It is found in the cytoplasm. Functionally, binds RpoD and negatively regulates RpoD-mediated transcription activation by preventing the interaction between the primary sigma factor RpoD with the catalytic core of the RNA polymerase and with promoter DNA. May be involved in replacement of the RNA polymerase sigma subunit from RpoD to RpoS during the transition from exponential growth to the stationary phase. The sequence is that of Regulator of sigma D from Salmonella arizonae (strain ATCC BAA-731 / CDC346-86 / RSK2980).